The primary structure comprises 223 residues: ATP phosphoribosyltransferase (223 aa).

It belongs to the ATP phosphoribosyltransferase family. Short subfamily. As to quaternary structure, heteromultimer composed of HisG and HisZ subunits.

The protein resides in the cytoplasm. The catalysed reaction is 1-(5-phospho-beta-D-ribosyl)-ATP + diphosphate = 5-phospho-alpha-D-ribose 1-diphosphate + ATP. It functions in the pathway amino-acid biosynthesis; L-histidine biosynthesis; L-histidine from 5-phospho-alpha-D-ribose 1-diphosphate: step 1/9. Its function is as follows. Catalyzes the condensation of ATP and 5-phosphoribose 1-diphosphate to form N'-(5'-phosphoribosyl)-ATP (PR-ATP). Has a crucial role in the pathway because the rate of histidine biosynthesis seems to be controlled primarily by regulation of HisG enzymatic activity. The polypeptide is ATP phosphoribosyltransferase (Sphingopyxis alaskensis (strain DSM 13593 / LMG 18877 / RB2256) (Sphingomonas alaskensis)).